Consider the following 156-residue polypeptide: Endoribonuclease YbeY (156 aa).

Positions 122, 126, and 132 each coordinate Zn(2+).

It belongs to the endoribonuclease YbeY family. Requires Zn(2+) as cofactor.

Its subcellular location is the cytoplasm. Its function is as follows. Single strand-specific metallo-endoribonuclease involved in late-stage 70S ribosome quality control and in maturation of the 3' terminus of the 16S rRNA. In Symbiobacterium thermophilum (strain DSM 24528 / JCM 14929 / IAM 14863 / T), this protein is Endoribonuclease YbeY.